The chain runs to 1385 residues: Formin-like protein 7 (1385 aa).

The Phosphatase tensin-type domain maps to 9–193 (FKKPPDGLLL…RYVSMRNVVP (185 aa)). Residue C126 is the Phosphocysteine intermediate of the active site. The C2 tensin-type domain maps to 199–358 (DRALTLDSVI…KASSTSQGNI (160 aa)). 4 disordered regions span residues 345-367 (IPQR…DGSE), 427-510 (APSR…LTVN), 649-989 (STAA…PLHW), and 1362-1385 (KRAQ…LLEP). Composition is skewed to polar residues over residues 349–358 (KASSTSQGNI), 448–470 (TSAS…SPVQ), and 483–510 (PAQS…LTVN). Pro residues-rich tracts occupy residues 654-665 (PPLPPPLPPPLK) and 689-701 (TQPP…PPIQ). The span at 702-718 (PTLISNSIYSSTSSVVS) shows a compositional bias: low complexity. Pro residues-rich tracts occupy residues 727–758 (PAPP…PPSA), 766–795 (PVPP…PPAA), and 802–815 (AVPP…PPMV). The span at 855 to 867 (QTSSLVSSLPSSR) shows a compositional bias: low complexity. 2 stretches are compositionally biased toward pro residues: residues 895 to 906 (SAPPAPPLPPPK) and 921 to 932 (WPPPPPPGPPPK). Positions 933–942 (NSSNSLPSKG) are enriched in low complexity. The 399-residue stretch at 974–1372 (RPNQSSKRTP…RAQMEAEKEK (399 aa)) folds into the FH2 domain.

Belongs to the formin-like family. Class-II subfamily.

This is Formin-like protein 7 (FH7) from Oryza sativa subsp. japonica (Rice).